We begin with the raw amino-acid sequence, 672 residues long: Zinc finger protein 271 (672 aa).

Positions 1–29 (MEIQFNYESQEHHLLSDGENKTKIGKPAS) are disordered. Residues 9–22 (SQEHHLLSDGENKT) are compositionally biased toward basic and acidic residues. A C2H2-type 1; degenerate zinc finger spans residues 80–102 (HNCDEYGQSFVWNTGLFRHRKTH). C2H2-type zinc fingers lie at residues 107–129 (YECD…QRIH), 135–157 (YSCN…QRVH), 163–185 (YKCD…QRIH), 191–213 (YQCS…QRIH), 219–241 (YTCN…QRIH), 247–269 (YKCD…QRIH), 275–297 (YPCN…RRIH), 303–325 (YKCN…QRIH), 331–353 (YPCD…QRIH), 359–381 (YPCN…HRIH), 387–409 (YECD…QRIH), 415–437 (YPCS…QRIH), 443–465 (YACN…QRVH), 471–493 (YHCN…QRIH), 499–521 (YLCT…QRIH), 527–549 (YKCS…QRIH), 555–577 (NPCN…QKIH), 583–605 (YKCD…QKIH), and 611–633 (YRCV…EEVH).

This sequence belongs to the krueppel C2H2-type zinc-finger protein family.

It localises to the nucleus. Functionally, may be involved in transcriptional regulation. The sequence is that of Zinc finger protein 271 (ZNF271) from Pongo abelii (Sumatran orangutan).